Reading from the N-terminus, the 828-residue chain is BEN domain-containing protein 3 (828 aa).

Lys20 participates in a covalent cross-link: Glycyl lysine isopeptide (Lys-Gly) (interchain with G-Cter in SUMO); alternate. Lys20 is covalently cross-linked (Glycyl lysine isopeptide (Lys-Gly) (interchain with G-Cter in SUMO1); alternate). Lys20 participates in a covalent cross-link: Glycyl lysine isopeptide (Lys-Gly) (interchain with G-Cter in SUMO2); alternate. Residues Lys41, Lys56, Lys58, Lys73, Lys128, Lys129, Lys137, Lys142, and Lys158 each participate in a glycyl lysine isopeptide (Lys-Gly) (interchain with G-Cter in SUMO2) cross-link. Residues 56-58 (KRK) carry the Nuclear localization signal motif. Ser164 is modified (phosphoserine). The interval 164–184 (SPSSLRLLNEPQKRDCGSTGA) is disordered. A Glycyl lysine isopeptide (Lys-Gly) (interchain with G-Cter in SUMO2) cross-link involves residue Lys176. The 102-residue stretch at 242 to 343 (PPPEYQLTAA…DFFSRFWAQR (102 aa)) folds into the BEN 1 domain. At Ser379 the chain carries Phosphoserine. One can recognise a BEN 2 domain in the interval 387–487 (ASDHVVDTQD…DELEGLGLDA (101 aa)). Lys427 participates in a covalent cross-link: Glycyl lysine isopeptide (Lys-Gly) (interchain with G-Cter in SUMO2). Positions 483-504 (LGLDAGSEGDPPRDDCYDSSSL) are disordered. A Phosphoserine modification is found at Ser489. Lys512 participates in a covalent cross-link: Glycyl lysine isopeptide (Lys-Gly) (interchain with G-Cter in SUMO); alternate. A Glycyl lysine isopeptide (Lys-Gly) (interchain with G-Cter in SUMO2); alternate cross-link involves residue Lys512. Residue Lys528 forms a Glycyl lysine isopeptide (Lys-Gly) (interchain with G-Cter in SUMO2) linkage. Residues 548–650 (VPGADCLLSK…ERCRRRDTEQ (103 aa)) form the BEN 3 domain. Residue Lys700 forms a Glycyl lysine isopeptide (Lys-Gly) (interchain with G-Cter in SUMO2) linkage. The BEN 4 domain maps to 715–816 (VPSPYLLSDK…ERCRRPNRKK (102 aa)).

Homooligomer, probably a homooctamer. Interacts with HDAC2 and HDAC3, but not HDAC1. Interacts with SALL4. Interacts with SMARCA5/SNF2H, BAZ2A/TIP5 and USP21. Interacts with the nucleosome remodeling and histone deacetylase (NuRD) repressor complex. Interacts (via BEN domains 1 and 3) with ERCC6L (via N-terminal TPR repeat); the interaction is direct. Sumoylated at Lys-20 by SUMO1 and at Lys-512 by SUMO1, SUMO2 and SUMO3. Sumoylation probably occurs sequentially, with that of Lys-20 preceding that of Lys-512. It does not alter association with heterochromatin, but is required for the repression of transcription. In terms of tissue distribution, expressed at least in heart, kidney, liver, ovary and spleen, with highest levels in spleen and lowest in heart. Expressed on the surface of T-cells.

The protein localises to the nucleus. It localises to the nucleolus. In terms of biological role, transcriptional repressor which associates with the NoRC (nucleolar remodeling complex) complex and plays a key role in repressing rDNA transcription. The sumoylated form modulates the stability of the NoRC complex component BAZ2A/TIP5 by controlling its USP21-mediated deubiquitination. Binds to unmethylated major satellite DNA and is involved in the recruitment of the Polycomb repressive complex 2 (PRC2) to major satellites. Stimulates the ERCC6L translocase and ATPase activities. This is BEN domain-containing protein 3 (BEND3) from Homo sapiens (Human).